The following is a 368-amino-acid chain: Dihydroorotate dehydrogenase (quinone) (368 aa).

FMN contacts are provided by residues Ala67–Lys71 and Thr91. A substrate-binding site is contributed by Lys71. Position 116-120 (Asn116–Phe120) interacts with substrate. Residues Asn146 and Asn179 each contribute to the FMN site. Asn179 is a substrate binding site. Ser182 acts as the Nucleophile in catalysis. Residue Asn184 participates in substrate binding. FMN-binding residues include Lys222 and Thr250. Position 251–252 (Asn251–Thr252) interacts with substrate. Residues Gly276, Gly305, and Tyr326–Ser327 contribute to the FMN site.

Belongs to the dihydroorotate dehydrogenase family. Type 2 subfamily. In terms of assembly, monomer. FMN is required as a cofactor.

The protein resides in the cell membrane. It catalyses the reaction (S)-dihydroorotate + a quinone = orotate + a quinol. The protein operates within pyrimidine metabolism; UMP biosynthesis via de novo pathway; orotate from (S)-dihydroorotate (quinone route): step 1/1. In terms of biological role, catalyzes the conversion of dihydroorotate to orotate with quinone as electron acceptor. The chain is Dihydroorotate dehydrogenase (quinone) from Streptomyces avermitilis (strain ATCC 31267 / DSM 46492 / JCM 5070 / NBRC 14893 / NCIMB 12804 / NRRL 8165 / MA-4680).